A 235-amino-acid polypeptide reads, in one-letter code: tRNA (guanine-N(1)-)-methyltransferase (235 aa).

Residues glycine 114 and 134 to 139 (VGDYIL) each bind S-adenosyl-L-methionine.

This sequence belongs to the RNA methyltransferase TrmD family. As to quaternary structure, homodimer.

The protein localises to the cytoplasm. The enzyme catalyses guanosine(37) in tRNA + S-adenosyl-L-methionine = N(1)-methylguanosine(37) in tRNA + S-adenosyl-L-homocysteine + H(+). In terms of biological role, specifically methylates guanosine-37 in various tRNAs. In Chelativorans sp. (strain BNC1), this protein is tRNA (guanine-N(1)-)-methyltransferase.